A 233-amino-acid polypeptide reads, in one-letter code: Small ribosomal subunit protein uS2 (233 aa).

It belongs to the universal ribosomal protein uS2 family.

This chain is Small ribosomal subunit protein uS2, found in Bacillus anthracis.